The primary structure comprises 89 residues: MPLDAAVKKSIMAEYATSEGDTGSPEVQVAMLTQRIRDLTEHLKTHQHDHHSRRGLLLLVGQRRNLLKYMAKKDINRYRSIIERLGIRR.

Belongs to the universal ribosomal protein uS15 family. In terms of assembly, part of the 30S ribosomal subunit. Forms a bridge to the 50S subunit in the 70S ribosome, contacting the 23S rRNA.

Functionally, one of the primary rRNA binding proteins, it binds directly to 16S rRNA where it helps nucleate assembly of the platform of the 30S subunit by binding and bridging several RNA helices of the 16S rRNA. Forms an intersubunit bridge (bridge B4) with the 23S rRNA of the 50S subunit in the ribosome. The sequence is that of Small ribosomal subunit protein uS15 from Kineococcus radiotolerans (strain ATCC BAA-149 / DSM 14245 / SRS30216).